We begin with the raw amino-acid sequence, 132 residues long: Chemokine-like protein TAFA-5 (132 aa).

The first 43 residues, Met1–Gly43, serve as a signal peptide directing secretion. Asn113 is a glycosylation site (N-linked (GlcNAc...) asparagine).

It belongs to the TAFA family.

Its subcellular location is the secreted. In terms of biological role, acts as a chemokine-like protein by regulating cell proliferation and migration through activation of G protein-coupled receptors (GPCRs), such as S1PR2 and FPR2. Stimulates chemotactic migration of macrophages mediated by the MAPK3/ERK1 and AKT1 pathway. Blocks TNFSF11/RANKL-induced osteoclast formation from macrophages by inhibiting up-regulation of osteoclast fusogenic and differentiation genes. Stimulation of macrophage migration and inhibition of osteoclast formation is mediated through the GPCR FPR2. Acts as an adipokine by negatively regulating vascular smooth muscle cell (VSMC) proliferation and migration in response to platelet-derived growth factor stimulation via GPCR S1PR2 and G protein GNA12/GNA13-transmitted RHOA signaling. Inhibits injury-induced cell proliferation and neointima formation in the femoral arteries. The chain is Chemokine-like protein TAFA-5 (TAFA5) from Bos taurus (Bovine).